A 228-amino-acid polypeptide reads, in one-letter code: MKPTRPFHQTPVITIDGPSASGKGTVAALVAASLGFHLLDSGALYRLAALASLRYTIEAHDVDALVKLIDDLHITFREGLAQLDGVDVSAEIRAEEVGSRASAIAVHAPVRAALVARQRAFRKEPGLVADGRDMGTVIFQDAVLKVFMTASVEARAARRHKQLIQKGFSANIDDLLRDLRERDERDSQRVAAPLKPAADAKLLDTSALSVDQAVEQVVQWYEALVPHA.

17–25 (GPSASGKGT) provides a ligand contact to ATP.

This sequence belongs to the cytidylate kinase family. Type 1 subfamily.

Its subcellular location is the cytoplasm. The catalysed reaction is CMP + ATP = CDP + ADP. The enzyme catalyses dCMP + ATP = dCDP + ADP. This Paraburkholderia xenovorans (strain LB400) protein is Cytidylate kinase.